A 484-amino-acid chain; its full sequence is Probable cobyric acid synthase (484 aa).

One can recognise a GATase cobBQ-type domain in the interval 247-433; it reads ELHIQIVKLP…LHGIFHNFAF (187 aa). C325 (nucleophile) is an active-site residue. H425 is a catalytic residue.

This sequence belongs to the CobB/CobQ family. CobQ subfamily.

It participates in cofactor biosynthesis; adenosylcobalamin biosynthesis. In terms of biological role, catalyzes amidations at positions B, D, E, and G on adenosylcobyrinic A,C-diamide. NH(2) groups are provided by glutamine, and one molecule of ATP is hydrogenolyzed for each amidation. In Thermococcus onnurineus (strain NA1), this protein is Probable cobyric acid synthase.